Reading from the N-terminus, the 476-residue chain is MAAAYSTVGAVNRAPLSLNGSGARASLVPSTAFFGSSLKKSAAKFPKASSGNFKIVAQEISEDQQTDKDKWKGLAYDISDDQQDITRGKGMVDTLFQAPMQSGTHYAVMSSYDYISQGLRQYNLDNNMDGFYIAPAFMDKLVVHITKNFLSLPNIKIPLILGIWGGKGQGKSFQCELVFAKMGINPIMMSAGELESGNAGEPAKLIRQRYREAADIIKKGKMCCLFINDLDAGAGRMGGTTQYTVNNQMVNATLMNIADNPTNVQLPGMYNKEENPRVPIIVTGNDFSTLYAPLIRDGRMEKFYWAPTREDRIGVCKGIFRTDNVADDDIVKLVDTFPGQSIDFFGALRARVYHDEVRKWVSEVGVDTIGKKLVNSKEGPPSFEQPKMTIDKLLGYGGMLVQEQENVKRVQLADKYMSEAALGDANNDAIKRGTFYGGQAAQQVGNVPVPEGCTDPQATNYDPTARSDDGSCVYKF.

A chloroplast-targeting transit peptide spans 1–56 (MAAAYSTVGAVNRAPLSLNGSGARASLVPSTAFFGSSLKKSAAKFPKASSGNFKIV). 165–172 (GGKGQGKS) serves as a coordination point for ATP.

This sequence belongs to the RuBisCO activase family.

It is found in the plastid. The protein resides in the chloroplast stroma. In terms of biological role, activation of RuBisCO (ribulose-1,5-bisphosphate carboxylase/oxygenase; EC 4.1.1.39) involves the ATP-dependent carboxylation of the epsilon-amino group of lysine leading to a carbamate structure. The sequence is that of Ribulose bisphosphate carboxylase/oxygenase activase 1, chloroplastic (RCA1) from Larrea tridentata (Creosote bush).